Reading from the N-terminus, the 165-residue chain is Chorismate pyruvate-lyase (165 aa).

4 residues coordinate substrate: M35, R77, L115, and E156.

Belongs to the UbiC family. Monomer.

It localises to the cytoplasm. It carries out the reaction chorismate = 4-hydroxybenzoate + pyruvate. It participates in cofactor biosynthesis; ubiquinone biosynthesis. Its function is as follows. Removes the pyruvyl group from chorismate, with concomitant aromatization of the ring, to provide 4-hydroxybenzoate (4HB) for the ubiquinone pathway. The protein is Chorismate pyruvate-lyase of Escherichia coli (strain K12 / MC4100 / BW2952).